Here is a 393-residue protein sequence, read N- to C-terminus: Acetylornithine aminotransferase 1 (393 aa).

Residue arginine 131 participates in N(2)-acetyl-L-ornithine binding. 215–218 provides a ligand contact to pyridoxal 5'-phosphate; it reads DEVQ. An N6-(pyridoxal phosphate)lysine modification is found at lysine 244. Threonine 272 contributes to the N(2)-acetyl-L-ornithine binding site. Residue threonine 273 coordinates pyridoxal 5'-phosphate.

It belongs to the class-III pyridoxal-phosphate-dependent aminotransferase family. ArgD subfamily. Homodimer. The cofactor is pyridoxal 5'-phosphate.

The protein localises to the cytoplasm. It carries out the reaction N(2)-acetyl-L-ornithine + 2-oxoglutarate = N-acetyl-L-glutamate 5-semialdehyde + L-glutamate. Its pathway is amino-acid biosynthesis; L-arginine biosynthesis; N(2)-acetyl-L-ornithine from L-glutamate: step 4/4. This is Acetylornithine aminotransferase 1 from Bordetella bronchiseptica (strain ATCC BAA-588 / NCTC 13252 / RB50) (Alcaligenes bronchisepticus).